The sequence spans 258 residues: MASDQTLFHYCLLTLYIIALPTWISLYFLQAPYGKHNRPGWGPTISPPLAWFLMESPTLWLTFFLFPSGQHFYNPKSFLLISPFLFHYFNRTVLYPLRLARNTTQTRGFPVSVAFMAFGFNLLNGYLQARWVSHYKDDYENEELFWWRFLAGLLIFVVGMWVNVRADKVLVGLKKQGDGGYKIPRGGLFELVSCPNYFGEIMEWFGWAVMTWSWVGFGFFLYTCANLMPRARATRLWYLEKFKDDYPKDRKAVIPFIY.

The next 6 membrane-spanning stretches (helical) occupy residues 8-28, 49-69, 77-97, 109-129, 144-164, and 201-221; these read FHYC…SLYF, LAWF…FPSG, SFLL…LYPL, FPVS…YLQA, LFWW…WVNV, and IMEW…GFFL.

It belongs to the steroid 5-alpha reductase family. In terms of tissue distribution, accumulates in fibers (seed trichomes) during both their initiation and elongation phases. Also present in roots, hypocotyls, leaves, flowers and ovules, and barely in cotyledons.

The protein localises to the membrane. It catalyses the reaction a 3-oxo-5alpha-steroid + NADP(+) = a 3-oxo-Delta(4)-steroid + NADPH + H(+). Its pathway is plant hormone biosynthesis; brassinosteroid biosynthesis. Its function is as follows. Involved in a reduction step in the biosynthesis of the plant steroid, brassinolide (BL). Promotes cotton fibers (seed trichomes) initiation and elongation. This chain is Steroid 5-alpha-reductase DET2, found in Gossypium hirsutum (Upland cotton).